Here is a 65-residue protein sequence, read N- to C-terminus: Large ribosomal subunit protein bL35 (65 aa).

The segment at 1–25 (MPKMKSHRGAAKRFKKTGTGKLKRA) is disordered.

Belongs to the bacterial ribosomal protein bL35 family.

The chain is Large ribosomal subunit protein bL35 from Clostridium botulinum (strain Eklund 17B / Type B).